The chain runs to 303 residues: 5'-3' exonuclease (303 aa).

Residues 179–262 (ISPAQWVDVK…LATITTEIEA (84 aa)) enclose the 5'-3' exonuclease domain.

In terms of biological role, 5'-3' exonuclease acting preferentially on double-stranded DNA. In Halalkalibacterium halodurans (strain ATCC BAA-125 / DSM 18197 / FERM 7344 / JCM 9153 / C-125) (Bacillus halodurans), this protein is 5'-3' exonuclease.